We begin with the raw amino-acid sequence, 88 residues long: DNA-directed RNA polymerase subunit omega (88 aa).

This sequence belongs to the RNA polymerase subunit omega family. In terms of assembly, the RNAP catalytic core consists of 2 alpha, 1 beta, 1 beta' and 1 omega subunit. When a sigma factor is associated with the core the holoenzyme is formed, which can initiate transcription.

The catalysed reaction is RNA(n) + a ribonucleoside 5'-triphosphate = RNA(n+1) + diphosphate. In terms of biological role, promotes RNA polymerase assembly. Latches the N- and C-terminal regions of the beta' subunit thereby facilitating its interaction with the beta and alpha subunits. This is DNA-directed RNA polymerase subunit omega from Anaeromyxobacter sp. (strain Fw109-5).